Here is a 745-residue protein sequence, read N- to C-terminus: Elongation factor G, mitochondrial (745 aa).

Residues 40–317 form the tr-type G domain; that stretch reads EKIRNIGISA…AVLDYLPNPG (278 aa). GTP is bound by residues 49–56, 116–120, and 170–173; these read AHIDSGKT, DTPGH, and NKLD.

This sequence belongs to the TRAFAC class translation factor GTPase superfamily. Classic translation factor GTPase family. EF-G/EF-2 subfamily.

It is found in the mitochondrion. The protein operates within protein biosynthesis; polypeptide chain elongation. In terms of biological role, mitochondrial GTPase that catalyzes the GTP-dependent ribosomal translocation step during translation elongation. During this step, the ribosome changes from the pre-translocational (PRE) to the post-translocational (POST) state as the newly formed A-site-bound peptidyl-tRNA and P-site-bound deacylated tRNA move to the P and E sites, respectively. Catalyzes the coordinated movement of the two tRNA molecules, the mRNA and conformational changes in the ribosome. Essential during development as it acts as a retrograde signal from mitochondria to the nucleus to slow down cell proliferation if mitochondrial energy output is low. The sequence is that of Elongation factor G, mitochondrial from Drosophila willistoni (Fruit fly).